Consider the following 317-residue polypeptide: Sulfate adenylyltransferase subunit 2 (317 aa).

2 disordered regions span residues 1–21 and 298–317; these read MPDS…APLD and RAID…EGYF.

Belongs to the PAPS reductase family. CysD subfamily. In terms of assembly, heterodimer composed of CysD, the smaller subunit, and CysN.

The catalysed reaction is sulfate + ATP + H(+) = adenosine 5'-phosphosulfate + diphosphate. The protein operates within sulfur metabolism; hydrogen sulfide biosynthesis; sulfite from sulfate: step 1/3. Functionally, with CysN forms the ATP sulfurylase (ATPS) that catalyzes the adenylation of sulfate producing adenosine 5'-phosphosulfate (APS) and diphosphate, the first enzymatic step in sulfur assimilation pathway. APS synthesis involves the formation of a high-energy phosphoric-sulfuric acid anhydride bond driven by GTP hydrolysis by CysN coupled to ATP hydrolysis by CysD. This Rhizobium etli (strain ATCC 51251 / DSM 11541 / JCM 21823 / NBRC 15573 / CFN 42) protein is Sulfate adenylyltransferase subunit 2.